The primary structure comprises 352 residues: Phenylalanine--tRNA ligase alpha subunit (352 aa).

Residue Glu258 coordinates Mg(2+).

This sequence belongs to the class-II aminoacyl-tRNA synthetase family. Phe-tRNA synthetase alpha subunit type 1 subfamily. In terms of assembly, tetramer of two alpha and two beta subunits. The cofactor is Mg(2+).

The protein localises to the cytoplasm. The enzyme catalyses tRNA(Phe) + L-phenylalanine + ATP = L-phenylalanyl-tRNA(Phe) + AMP + diphosphate + H(+). This is Phenylalanine--tRNA ligase alpha subunit from Staphylococcus haemolyticus (strain JCSC1435).